The primary structure comprises 319 residues: Methionyl-tRNA formyltransferase (319 aa).

Serine 113–proline 116 serves as a coordination point for (6S)-5,6,7,8-tetrahydrofolate.

It belongs to the Fmt family.

The catalysed reaction is L-methionyl-tRNA(fMet) + (6R)-10-formyltetrahydrofolate = N-formyl-L-methionyl-tRNA(fMet) + (6S)-5,6,7,8-tetrahydrofolate + H(+). Its function is as follows. Attaches a formyl group to the free amino group of methionyl-tRNA(fMet). The formyl group appears to play a dual role in the initiator identity of N-formylmethionyl-tRNA by promoting its recognition by IF2 and preventing the misappropriation of this tRNA by the elongation apparatus. The chain is Methionyl-tRNA formyltransferase from Pseudomonas fluorescens (strain Pf0-1).